A 101-amino-acid polypeptide reads, in one-letter code: Large ribosomal subunit protein bL28 (101 aa).

This sequence belongs to the bacterial ribosomal protein bL28 family.

The polypeptide is Large ribosomal subunit protein bL28 (Methylorubrum extorquens (strain CM4 / NCIMB 13688) (Methylobacterium extorquens)).